We begin with the raw amino-acid sequence, 239 residues long: O-methyltransferase ankF (239 aa).

S-adenosyl-L-methionine-binding positions include Glu71, 73–74 (GT), Ser79, Glu98, and Ala127.

This sequence belongs to the class I-like SAM-binding methyltransferase superfamily. Cation-dependent O-methyltransferase family.

It catalyses the reaction NK13650 B + S-adenosyl-L-methionine = NK13650 D + S-adenosyl-L-homocysteine + H(+). It participates in secondary metabolite biosynthesis. In terms of biological role, O-methyltransferase; part of the ank cluster that mediates the biosynthesis of NK13650 C, a highly modified cyclo-arginine-tyrosine dipeptide. AnkF converts NK13650 B to produce NK13650 D via methylation of the C-17 phenol group. Within the pathway, the cyclodipeptide synthase ankA acts as the scaffold-generating enzyme and is responsible for formation of the cyclo-Arg-Tyr diketopiperazine (cRY) from L-Arg and L-Tyr. The ankA product cRY is desaturated by the cytochrome P450 monooxygenase ankB to yield a dehydro-cyclodipeptide intermediate. The FAD-dependent monooxygenase ankC then installs the m-OH, ankD catalyzes the attachment of L-homoserine, and ankE ligates citrate to the ankD product to yield NK13650 B. The O-methyltransferase ankF is responsible for methylation of the C-17 phenol group of NK13650 B to produce NK13650 D. Amidation of NK13650 D with L-Asp by ankG then leads to the production of NK13650 C, whereas amidation of NK13650 B produces NK13650 A. The sequence is that of O-methyltransferase ankF from Aspergillus thermomutatus (Neosartorya pseudofischeri).